The primary structure comprises 307 residues: Leucine-rich repeat-containing protein 59 (307 aa).

Met1 carries the N-acetylmethionine modification. The residue at position 2 (Thr2) is an N-acetylthreonine; in Leucine-rich repeat-containing protein 59, N-terminally processed. Residues Thr2 to Ser244 lie on the Cytoplasmic side of the membrane. 5 LRR repeats span residues Asn10–Pro31, Lys40–Thr62, His63–Leu84, Asn86–Leu107, and Asn109–Ala128. 2 positions are modified to phosphoserine: Ser23 and Ser25. Lys73 is subject to N6-succinyllysine. Position 135 is an N6-acetyllysine (Lys135). Residues Met148–Lys216 are a coiled coil. Residues Ala150–Asn242 form a disordered region. Residues Asp154–Thr221 are compositionally biased toward basic and acidic residues. A compositionally biased stretch (basic residues) spans Ser229–Asn242. A helical membrane pass occupies residues Trp245–Val265. Over Cys266–Gln307 the chain is Lumenal.

In terms of assembly, can form homodimers. Interacts with SGO1. Interacts with FGF1.

The protein resides in the microsome membrane. It localises to the endoplasmic reticulum membrane. It is found in the nucleus envelope. Functionally, required for nuclear import of FGF1, but not that of FGF2. Might regulate nuclear import of exogenous FGF1 by facilitating interaction with the nuclear import machinery and by transporting cytosolic FGF1 to, and possibly through, the nuclear pores. The protein is Leucine-rich repeat-containing protein 59 (Lrrc59) of Rattus norvegicus (Rat).